The following is a 471-amino-acid chain: Tryptophanase (471 aa).

3 positions are modified to N6-acetyllysine: lysine 5, lysine 115, and lysine 156. Lysine 270 is subject to N6-(pyridoxal phosphate)lysine. An N6-acetyllysine modification is found at lysine 450.

The protein belongs to the beta-eliminating lyase family. Homotetramer. Requires pyridoxal 5'-phosphate as cofactor.

It carries out the reaction L-tryptophan + H2O = indole + pyruvate + NH4(+). The protein operates within amino-acid degradation; L-tryptophan degradation via pyruvate pathway; indole and pyruvate from L-tryptophan: step 1/1. In Escherichia coli O9:H4 (strain HS), this protein is Tryptophanase.